Here is a 105-residue protein sequence, read N- to C-terminus: Pyrimidine/purine nucleoside phosphorylase (105 aa).

Belongs to the nucleoside phosphorylase PpnP family.

It carries out the reaction a purine D-ribonucleoside + phosphate = a purine nucleobase + alpha-D-ribose 1-phosphate. The enzyme catalyses adenosine + phosphate = alpha-D-ribose 1-phosphate + adenine. The catalysed reaction is cytidine + phosphate = cytosine + alpha-D-ribose 1-phosphate. It catalyses the reaction guanosine + phosphate = alpha-D-ribose 1-phosphate + guanine. It carries out the reaction inosine + phosphate = alpha-D-ribose 1-phosphate + hypoxanthine. The enzyme catalyses thymidine + phosphate = 2-deoxy-alpha-D-ribose 1-phosphate + thymine. The catalysed reaction is uridine + phosphate = alpha-D-ribose 1-phosphate + uracil. It catalyses the reaction xanthosine + phosphate = alpha-D-ribose 1-phosphate + xanthine. Functionally, catalyzes the phosphorolysis of diverse nucleosides, yielding D-ribose 1-phosphate and the respective free bases. Can use uridine, adenosine, guanosine, cytidine, thymidine, inosine and xanthosine as substrates. Also catalyzes the reverse reactions. The sequence is that of Pyrimidine/purine nucleoside phosphorylase from Delftia acidovorans (strain DSM 14801 / SPH-1).